A 331-amino-acid polypeptide reads, in one-letter code: 4-hydroxy-3-methylbut-2-enyl diphosphate reductase (331 aa).

C12 is a binding site for [4Fe-4S] cluster. Positions 43 and 81 each coordinate (2E)-4-hydroxy-3-methylbut-2-enyl diphosphate. Residues H43 and H81 each contribute to the dimethylallyl diphosphate site. Isopentenyl diphosphate contacts are provided by H43 and H81. C103 contributes to the [4Fe-4S] cluster binding site. H131 is a binding site for (2E)-4-hydroxy-3-methylbut-2-enyl diphosphate. H131 contacts dimethylallyl diphosphate. Isopentenyl diphosphate is bound at residue H131. E133 serves as the catalytic Proton donor. Position 170 (T170) interacts with (2E)-4-hydroxy-3-methylbut-2-enyl diphosphate. Residue C198 participates in [4Fe-4S] cluster binding. (2E)-4-hydroxy-3-methylbut-2-enyl diphosphate-binding residues include S226, N228, and S271. Residues S226, N228, and S271 each contribute to the dimethylallyl diphosphate site. S226, N228, and S271 together coordinate isopentenyl diphosphate.

This sequence belongs to the IspH family. The cofactor is [4Fe-4S] cluster.

The enzyme catalyses isopentenyl diphosphate + 2 oxidized [2Fe-2S]-[ferredoxin] + H2O = (2E)-4-hydroxy-3-methylbut-2-enyl diphosphate + 2 reduced [2Fe-2S]-[ferredoxin] + 2 H(+). It catalyses the reaction dimethylallyl diphosphate + 2 oxidized [2Fe-2S]-[ferredoxin] + H2O = (2E)-4-hydroxy-3-methylbut-2-enyl diphosphate + 2 reduced [2Fe-2S]-[ferredoxin] + 2 H(+). It functions in the pathway isoprenoid biosynthesis; dimethylallyl diphosphate biosynthesis; dimethylallyl diphosphate from (2E)-4-hydroxy-3-methylbutenyl diphosphate: step 1/1. It participates in isoprenoid biosynthesis; isopentenyl diphosphate biosynthesis via DXP pathway; isopentenyl diphosphate from 1-deoxy-D-xylulose 5-phosphate: step 6/6. Functionally, catalyzes the conversion of 1-hydroxy-2-methyl-2-(E)-butenyl 4-diphosphate (HMBPP) into a mixture of isopentenyl diphosphate (IPP) and dimethylallyl diphosphate (DMAPP). Acts in the terminal step of the DOXP/MEP pathway for isoprenoid precursor biosynthesis. This Listeria monocytogenes serovar 1/2a (strain ATCC BAA-679 / EGD-e) protein is 4-hydroxy-3-methylbut-2-enyl diphosphate reductase.